A 295-amino-acid chain; its full sequence is Small ribosomal subunit protein uS2 (295 aa).

The tract at residues 232–295 is disordered; sequence RRRGTDEKPE…DEQPAAAAAE (64 aa). Basic and acidic residues predominate over residues 252 to 287; that stretch reads EWERELLEEPKKSDEQPAKSDELPVKTDEQPTKSDE.

Belongs to the universal ribosomal protein uS2 family.

The protein is Small ribosomal subunit protein uS2 of Salinispora tropica (strain ATCC BAA-916 / DSM 44818 / JCM 13857 / NBRC 105044 / CNB-440).